The sequence spans 530 residues: Phosphoenolpyruvate carboxykinase (ATP) (530 aa).

Residues arginine 59, tyrosine 198, and lysine 204 each coordinate substrate. Residues lysine 204, histidine 223, and 239-247 (GLSGTGKTT) each bind ATP. Residues lysine 204 and histidine 223 each coordinate Mn(2+). Aspartate 260 contacts Mn(2+). ATP is bound by residues glutamate 288, arginine 325, 440–441 (RI), and threonine 446. Arginine 325 is a substrate binding site.

The protein belongs to the phosphoenolpyruvate carboxykinase (ATP) family. Mn(2+) is required as a cofactor.

It localises to the cytoplasm. The catalysed reaction is oxaloacetate + ATP = phosphoenolpyruvate + ADP + CO2. Its pathway is carbohydrate biosynthesis; gluconeogenesis. Its function is as follows. Involved in the gluconeogenesis. Catalyzes the conversion of oxaloacetate (OAA) to phosphoenolpyruvate (PEP) through direct phosphoryl transfer between the nucleoside triphosphate and OAA. In Azobacteroides pseudotrichonymphae genomovar. CFP2, this protein is Phosphoenolpyruvate carboxykinase (ATP).